Here is a 350-residue protein sequence, read N- to C-terminus: METNSSLPTNISGGTPAVSAGYLFLDIITYLVFAVTFVLGVLGNGLVIWVAGFRMTHTVTTISYLNLAVADFCFTSTLPFFMVRKAMGGHWPFGWFLCKFVFTIVDINLFGSVFLIALIALDRCVCVLHPVWTQNHRTVSLAKKVIIGPWVMALLLTLPVIIRVTTVPGKTGTVACTFNFSPWTNDPKERINVAVAMLTVRGIIRFIIGFSAPMSIVAVSYGLIATKIHKQGLIKSSRPLRVLSFVAAAFFLCWSPYQVVALIATVRIRELLQGMYKEIGIAVDVTSALAFFNSCLNPMLYVFMGQDFRERLIHALPASLERALTEDSTQTSDTATNSTLPSAEVELQAK.

Topologically, residues 1–27 are extracellular; it reads METNSSLPTNISGGTPAVSAGYLFLDI. Asn4 and Asn10 each carry an N-linked (GlcNAc...) asparagine glycan. The chain crosses the membrane as a helical span at residues 28–50; that stretch reads ITYLVFAVTFVLGVLGNGLVIWV. Over 51–61 the chain is Cytoplasmic; sequence AGFRMTHTVTT. A helical transmembrane segment spans residues 62 to 83; it reads ISYLNLAVADFCFTSTLPFFMV. The Extracellular segment spans residues 84–100; it reads RKAMGGHWPFGWFLCKF. A disulfide bridge links Cys98 with Cys176. The helical transmembrane segment at 101 to 121 threads the bilayer; it reads VFTIVDINLFGSVFLIALIAL. The Cytoplasmic segment spans residues 122–140; it reads DRCVCVLHPVWTQNHRTVS. A helical membrane pass occupies residues 141 to 162; the sequence is LAKKVIIGPWVMALLLTLPVII. Topologically, residues 163 to 205 are extracellular; that stretch reads RVTTVPGKTGTVACTFNFSPWTNDPKERINVAVAMLTVRGIIR. The chain crosses the membrane as a helical span at residues 206–226; it reads FIIGFSAPMSIVAVSYGLIAT. Topologically, residues 227 to 242 are cytoplasmic; sequence KIHKQGLIKSSRPLRV. The chain crosses the membrane as a helical span at residues 243 to 266; sequence LSFVAAAFFLCWSPYQVVALIATV. Topologically, residues 267–285 are extracellular; it reads RIRELLQGMYKEIGIAVDV. The helical transmembrane segment at 286-305 threads the bilayer; sequence TSALAFFNSCLNPMLYVFMG. Over 306–350 the chain is Cytoplasmic; the sequence is QDFRERLIHALPASLERALTEDSTQTSDTATNSTLPSAEVELQAK. Positions 325–350 are disordered; that stretch reads TEDSTQTSDTATNSTLPSAEVELQAK. Over residues 326 to 341 the composition is skewed to polar residues; sequence EDSTQTSDTATNSTLP. Residue Ser328 is modified to Phosphoserine. Residues Thr329 and Thr331 each carry the phosphothreonine modification. Residue Ser332 is modified to Phosphoserine. Phosphothreonine is present on residues Thr334 and Thr336. Ser338 is subject to Phosphoserine. At Thr339 the chain carries Phosphothreonine.

Belongs to the G-protein coupled receptor 1 family. Interacts with S.aureus chemotaxis inhibitory protein (CHIPS); the interaction blocks the receptor and may thus inhibit the immune response. Phosphorylated; which is necessary for desensitization. Neutrophils.

The protein resides in the cell membrane. Functionally, high affinity receptor for N-formyl-methionyl peptides (fMLP), which are powerful neutrophil chemotactic factors. Binding of fMLP to the receptor stimulates intracellular calcium mobilization and superoxide anion release. This response is mediated via a G-protein that activates a phosphatidylinositol-calcium second messenger system. Receptor for TAFA4, mediates its effects on chemoattracting macrophages, promoting phagocytosis and increasing ROS release. Receptor for cathepsin CTSG, leading to increased phagocyte chemotaxis. The sequence is that of fMet-Leu-Phe receptor (FPR1) from Homo sapiens (Human).